Consider the following 359-residue polypeptide: Uracil-DNA glycosylase (359 aa).

A mitochondrion-targeting transit peptide spans 1–21; sequence MWCMRRLPTNSVMTVARKRKQ. D162 (proton acceptor) is an active-site residue.

Belongs to the uracil-DNA glycosylase (UDG) superfamily. UNG family.

It is found in the mitochondrion. It localises to the nucleus. It catalyses the reaction Hydrolyzes single-stranded DNA or mismatched double-stranded DNA and polynucleotides, releasing free uracil.. Excises uracil residues from the DNA which can arise as a result of misincorporation of dUMP residues by DNA polymerase or due to deamination of cytosine. Not involved in strand-directed mismatch repair. This chain is Uracil-DNA glycosylase, found in Saccharomyces cerevisiae (strain ATCC 204508 / S288c) (Baker's yeast).